A 540-amino-acid chain; its full sequence is CTP synthase (540 aa).

An amidoligase domain region spans residues M1 to I270. S18 serves as a coordination point for CTP. S18 provides a ligand contact to UTP. ATP contacts are provided by residues S19–L24 and D76. 2 residues coordinate Mg(2+): D76 and E144. CTP is bound by residues D151–E153, K191–Q196, and K227. Residues K191–Q196 and K227 contribute to the UTP site. Positions T295–T537 constitute a Glutamine amidotransferase type-1 domain. An L-glutamine-binding site is contributed by G356. C383 (nucleophile; for glutamine hydrolysis) is an active-site residue. L-glutamine is bound by residues M384–Q387, E407, and R462. Active-site residues include H510 and E512.

The protein belongs to the CTP synthase family. In terms of assembly, homotetramer.

The catalysed reaction is UTP + L-glutamine + ATP + H2O = CTP + L-glutamate + ADP + phosphate + 2 H(+). The enzyme catalyses L-glutamine + H2O = L-glutamate + NH4(+). It catalyses the reaction UTP + NH4(+) + ATP = CTP + ADP + phosphate + 2 H(+). The protein operates within pyrimidine metabolism; CTP biosynthesis via de novo pathway; CTP from UDP: step 2/2. With respect to regulation, allosterically activated by GTP, when glutamine is the substrate; GTP has no effect on the reaction when ammonia is the substrate. The allosteric effector GTP functions by stabilizing the protein conformation that binds the tetrahedral intermediate(s) formed during glutamine hydrolysis. Inhibited by the product CTP, via allosteric rather than competitive inhibition. Functionally, catalyzes the ATP-dependent amination of UTP to CTP with either L-glutamine or ammonia as the source of nitrogen. Regulates intracellular CTP levels through interactions with the four ribonucleotide triphosphates. The sequence is that of CTP synthase from Ehrlichia ruminantium (strain Welgevonden).